The sequence spans 430 residues: Serine--tRNA ligase (430 aa).

Position 237–239 (237–239) interacts with L-serine; that stretch reads TAE. 268–270 contacts ATP; it reads RSE. E291 serves as a coordination point for L-serine. 355–358 lines the ATP pocket; it reads EISS. S391 contacts L-serine.

It belongs to the class-II aminoacyl-tRNA synthetase family. Type-1 seryl-tRNA synthetase subfamily. As to quaternary structure, homodimer. The tRNA molecule binds across the dimer.

Its subcellular location is the cytoplasm. It catalyses the reaction tRNA(Ser) + L-serine + ATP = L-seryl-tRNA(Ser) + AMP + diphosphate + H(+). The enzyme catalyses tRNA(Sec) + L-serine + ATP = L-seryl-tRNA(Sec) + AMP + diphosphate + H(+). It participates in aminoacyl-tRNA biosynthesis; selenocysteinyl-tRNA(Sec) biosynthesis; L-seryl-tRNA(Sec) from L-serine and tRNA(Sec): step 1/1. Its function is as follows. Catalyzes the attachment of serine to tRNA(Ser). Is also able to aminoacylate tRNA(Sec) with serine, to form the misacylated tRNA L-seryl-tRNA(Sec), which will be further converted into selenocysteinyl-tRNA(Sec). This is Serine--tRNA ligase from Citrobacter koseri (strain ATCC BAA-895 / CDC 4225-83 / SGSC4696).